Reading from the N-terminus, the 354-residue chain is NADH-quinone oxidoreductase subunit H (354 aa).

Helical transmembrane passes span 22–42 (ILIRAVLIVVPVLLCVAYLIL), 91–111 (YLVAPLMVLMPAVAVWAVIPF), 124–144 (LLYVMAISSVGVYGVILAGWA), 162–182 (VSYEIAMGFALVTVLMVSGSL), 203–223 (LLSWNWLPLLPMFGVYFISGV), 250–270 (GMTFALFFLAEYINMIIISTM), 291–311 (IPGFFWLVIKVFLLLSVFIWI), and 326–346 (LGWKIFIPLTVAWLIIVAIWI).

The protein belongs to the complex I subunit 1 family. In terms of assembly, NDH-1 is composed of 14 different subunits. Subunits NuoA, H, J, K, L, M, N constitute the membrane sector of the complex.

It localises to the cell inner membrane. It carries out the reaction a quinone + NADH + 5 H(+)(in) = a quinol + NAD(+) + 4 H(+)(out). NDH-1 shuttles electrons from NADH, via FMN and iron-sulfur (Fe-S) centers, to quinones in the respiratory chain. The immediate electron acceptor for the enzyme in this species is believed to be ubiquinone. Couples the redox reaction to proton translocation (for every two electrons transferred, four hydrogen ions are translocated across the cytoplasmic membrane), and thus conserves the redox energy in a proton gradient. This subunit may bind ubiquinone. In Cupriavidus metallidurans (strain ATCC 43123 / DSM 2839 / NBRC 102507 / CH34) (Ralstonia metallidurans), this protein is NADH-quinone oxidoreductase subunit H.